Consider the following 877-residue polypeptide: MTTTPPVLSGPEIRQQFLNFFADRQHQILPSASLVPEDPTVLLTIAGMLPFKPIFLGQKSAEFPRATTSQKCIRTNDIENVGRTARHHTFFEMLGNFSFGDYFKSQAIAWAWELSTQVFKLPAERLVVSVFEEDDEAFAIWRDEIGIPAHRIQRMGADDNFWVSGPTGPCGPCSEIYYDFHPELGDEKLDLEDDSRFIEFYNLVFMQYNRDNAGNLTPLEKKNIDTGMGLERMAQILQKVPNNYETDLIFPIIQTAANIAGIDYAQANEKTKVSLKVIGDHVRSVVHMIADGISASNLGRGYVLRRLIRRVVRHGRLLGINGEFTTKVAATAVQLAQPVYPNVLERQSLIEQELQREEAAFLKTLERGEKLLADLMADGVTEIAGADAFTLYDTFGFPLELTQEIAEEQGITVDVEGFEKAMQEQQERSKAAHETIDLTVQESLDKLANHIHPTEFLGYTDLQSSAIVKAVLVGGELVDQAVAGQTVQIVLDQTPFYGESGGQIGDKGFLNGDNLLIRIEDVKRESGIFIHFGRVERGTVQIGTTITATIDRACRRRAQANHTATHLLQSALKRVVDEGISQAGSLVDFNRLRFDFNSPRAVTMEELQQIEDLINQWIAEAHQTEVAVMPIADAKAKGAIAMFGEKYGAEVRVIDVPGVSLELCGGTHVANTAEIGLFKIVAETGIAAGVRRIEAVAGPSVLDYLNVREAVVKELGDRLKAKPEEIPDRVHQLQQELKASQKQLEALKQELALQKSEQLLTQAQTVGEFKILVADLGTVDGESLKTAAERLQQKLGESAVVLASIPEEGKVSLVAAFSPQLVKTKQLKAGQFIGAIAKICGGGGGGRPNLAQAGGRDASKLPEALATAKQTLLAELG.

Zn(2+)-binding residues include histidine 562, histidine 566, cysteine 664, and histidine 668.

This sequence belongs to the class-II aminoacyl-tRNA synthetase family. Zn(2+) serves as cofactor.

The protein localises to the cytoplasm. It carries out the reaction tRNA(Ala) + L-alanine + ATP = L-alanyl-tRNA(Ala) + AMP + diphosphate. In terms of biological role, catalyzes the attachment of alanine to tRNA(Ala) in a two-step reaction: alanine is first activated by ATP to form Ala-AMP and then transferred to the acceptor end of tRNA(Ala). Also edits incorrectly charged Ser-tRNA(Ala) and Gly-tRNA(Ala) via its editing domain. The polypeptide is Alanine--tRNA ligase (Synechocystis sp. (strain ATCC 27184 / PCC 6803 / Kazusa)).